A 67-amino-acid chain; its full sequence is Phycobilisome 7.8 kDa linker polypeptide, allophycocyanin-associated, core (67 aa).

The region spanning 1–56 is the CpcD-like domain; it reads GRLFKITACVPSQTRIRTQRELQNTYFTKLVPYENWFREQQRIQKMGGKIVKVELA.

It belongs to the phycobilisome linker protein family.

Its subcellular location is the cellular thylakoid membrane. In terms of biological role, rod linker protein, associated with allophycocyanin. Linker polypeptides determine the state of aggregation and the location of the disk-shaped phycobiliprotein units within the phycobilisome and modulate their spectroscopic properties in order to mediate a directed and optimal energy transfer. This Mastigocladus laminosus (Fischerella sp.) protein is Phycobilisome 7.8 kDa linker polypeptide, allophycocyanin-associated, core (apcC).